Here is a 405-residue protein sequence, read N- to C-terminus: Chorismate synthase (405 aa).

The NADP(+) site is built by R43 and R49. Residues 138-140 (RAS) and 259-260 (QA) each bind FMN. Residues 275 to 286 (RRGSQAHDEMRP) are compositionally biased toward basic and acidic residues. Residues 275–308 (RRGSQAHDEMRPGPDGVLRSTNRAGGLEGGMTNG) form a disordered region. Residues G303, 318-322 (KPIST), and R344 contribute to the FMN site.

The protein belongs to the chorismate synthase family. In terms of assembly, homotetramer. FMNH2 is required as a cofactor.

The catalysed reaction is 5-O-(1-carboxyvinyl)-3-phosphoshikimate = chorismate + phosphate. The protein operates within metabolic intermediate biosynthesis; chorismate biosynthesis; chorismate from D-erythrose 4-phosphate and phosphoenolpyruvate: step 7/7. In terms of biological role, catalyzes the anti-1,4-elimination of the C-3 phosphate and the C-6 proR hydrogen from 5-enolpyruvylshikimate-3-phosphate (EPSP) to yield chorismate, which is the branch point compound that serves as the starting substrate for the three terminal pathways of aromatic amino acid biosynthesis. This reaction introduces a second double bond into the aromatic ring system. The sequence is that of Chorismate synthase from Nocardia farcinica (strain IFM 10152).